A 244-amino-acid chain; its full sequence is Putative quercetin 2,3-dioxygenase Mb0187c (244 aa).

4 residues coordinate a divalent metal cation: His-60, His-62, His-104, and Glu-106.

Belongs to the pirin family. Requires a divalent metal cation as cofactor.

It carries out the reaction quercetin + O2 = 2-(3,4-dihydroxybenzoyloxy)-4,6-dihydroxybenzoate + CO. It participates in flavonoid metabolism; quercetin degradation. Its function is as follows. Putative quercetin 2,3-dioxygenase. The protein is Putative quercetin 2,3-dioxygenase Mb0187c of Mycobacterium bovis (strain ATCC BAA-935 / AF2122/97).